We begin with the raw amino-acid sequence, 217 residues long: Small ribosomal subunit protein uS3 (217 aa).

Residues 38-106 (IRKFVQKELA…QVHINIIEIK (69 aa)) enclose the KH type-2 domain.

This sequence belongs to the universal ribosomal protein uS3 family. In terms of assembly, part of the 30S ribosomal subunit. Forms a tight complex with proteins S10 and S14.

In terms of biological role, binds the lower part of the 30S subunit head. Binds mRNA in the 70S ribosome, positioning it for translation. The chain is Small ribosomal subunit protein uS3 from Streptococcus sanguinis (strain SK36).